The sequence spans 436 residues: UPF0229 protein Meso_0256 (436 aa).

Positions 53 to 110 (PMPARGTSEPTFRPDRSSGERGYILPGNKEFAPGDRLPKPGASGGEGGTGAGRGGSDD) are disordered. Residues 94 to 106 (ASGGEGGTGAGRG) are compositionally biased toward gly residues.

The protein belongs to the UPF0229 family.

The chain is UPF0229 protein Meso_0256 from Chelativorans sp. (strain BNC1).